A 136-amino-acid chain; its full sequence is ATP synthase epsilon chain (136 aa).

It belongs to the ATPase epsilon chain family. F-type ATPases have 2 components, CF(1) - the catalytic core - and CF(0) - the membrane proton channel. CF(1) has five subunits: alpha(3), beta(3), gamma(1), delta(1), epsilon(1). CF(0) has three main subunits: a, b and c.

Its subcellular location is the cellular thylakoid membrane. Produces ATP from ADP in the presence of a proton gradient across the membrane. In Parasynechococcus marenigrum (strain WH8102), this protein is ATP synthase epsilon chain.